Reading from the N-terminus, the 342-residue chain is Transcription initiation factor TFIID subunit 12 (342 aa).

The interval methionine 1–alanine 221 is disordered. Positions proline 12–glutamine 35 are enriched in polar residues. Low complexity-rich tracts occupy residues proline 39–proline 59, proline 67–alanine 89, glutamine 96–glycine 146, and glutamine 180–glutamine 192. Residues glutamine 193–methionine 218 show a composition bias toward pro residues. The 68-residue stretch at glutamate 230 to methionine 297 folds into the Histone-fold domain.

This sequence belongs to the TAF12 family. As to quaternary structure, interacts (via histone-fold domain) with taf-4 (via the histone-fold domain). Interaction may facilitate the nuclear localization of taf-4.

The protein resides in the nucleus. Part of the general transcription factor complex TFIID. Plays a role in recruiting taf-4 to the nucleus and thereby activating transcription initiation by RNA polymerase II, as part of the TFIID complex. The sequence is that of Transcription initiation factor TFIID subunit 12 from Caenorhabditis elegans.